The chain runs to 262 residues: ELL-associated factor 2 (262 aa).

The tract at residues 17 to 104 (LKLGESFEKQ…TGECRLEKLS (88 aa)) is necessary for interaction with ELL. Residues 124 to 144 (LEQQQQQMWNPPRTSNLVQHS) are compositionally biased toward polar residues. Disordered regions lie at residues 124 to 154 (LEQQ…SPTS) and 170 to 232 (MDQM…ADTT). A phosphoserine mark is found at Ser-146, Ser-151, and Ser-154. Over residues 174-192 (SSCDSSSDSRSSSSSSSED) the composition is skewed to low complexity. The tract at residues 177–262 (DSSSDSRSSS…LSESDSDSED (86 aa)) is necessary for transactivation activity. The necessary for interaction with TCEA1 and transactivation activity stretch occupies residues 248-262 (RSDLQLSESDSDSED).

This sequence belongs to the EAF family. In terms of assembly, component of the super elongation complex (SEC), at least composed of EAF1, EAF2, CDK9, MLLT3/AF9, AFF (AFF1 or AFF4), the P-TEFb complex and ELL (ELL, ELL2 or ELL3). Interacts with ELL, ELL2 and TCEA1.

Its subcellular location is the nucleus speckle. Functionally, acts as a transcriptional transactivator of ELL, ELL2 and TCEA1 elongation activities. Potent inducer of apoptosis in prostatic and non-prostatic cell lines. The protein is ELL-associated factor 2 (Eaf2) of Rattus norvegicus (Rat).